Reading from the N-terminus, the 478-residue chain is Probable glycine dehydrogenase (decarboxylating) subunit 2 (478 aa).

Position 264 is an N6-(pyridoxal phosphate)lysine (Lys264).

Belongs to the GcvP family. C-terminal subunit subfamily. In terms of assembly, the glycine cleavage system is composed of four proteins: P, T, L and H. In this organism, the P 'protein' is a heterodimer of two subunits. Requires pyridoxal 5'-phosphate as cofactor.

The enzyme catalyses N(6)-[(R)-lipoyl]-L-lysyl-[glycine-cleavage complex H protein] + glycine + H(+) = N(6)-[(R)-S(8)-aminomethyldihydrolipoyl]-L-lysyl-[glycine-cleavage complex H protein] + CO2. The glycine cleavage system catalyzes the degradation of glycine. The P protein binds the alpha-amino group of glycine through its pyridoxal phosphate cofactor; CO(2) is released and the remaining methylamine moiety is then transferred to the lipoamide cofactor of the H protein. This chain is Probable glycine dehydrogenase (decarboxylating) subunit 2, found in Endomicrobium trichonymphae.